The sequence spans 714 residues: Polyribonucleotide nucleotidyltransferase (714 aa).

Aspartate 490 and aspartate 496 together coordinate Mg(2+). The region spanning proline 556 to isoleucine 615 is the KH domain. One can recognise an S1 motif domain in the interval glycine 625–lysine 693.

This sequence belongs to the polyribonucleotide nucleotidyltransferase family. The cofactor is Mg(2+).

It is found in the cytoplasm. It carries out the reaction RNA(n+1) + phosphate = RNA(n) + a ribonucleoside 5'-diphosphate. Functionally, involved in mRNA degradation. Catalyzes the phosphorolysis of single-stranded polyribonucleotides processively in the 3'- to 5'-direction. In Ruegeria pomeroyi (strain ATCC 700808 / DSM 15171 / DSS-3) (Silicibacter pomeroyi), this protein is Polyribonucleotide nucleotidyltransferase.